Consider the following 188-residue polypeptide: Antitoxin SocA (188 aa).

As to quaternary structure, interacts with cognate toxin SocB and with ClpX.

In terms of biological role, antitoxin component of an atypical type II toxin-antitoxin (TA) system. Unlike most type II TA systems, neutralizes the toxic activity of cognate toxin SocB by acting as an adapter to promote its degradation by ClpXP; degradation is dependent on the N-terminus of ClpX. The chain is Antitoxin SocA from Caulobacter vibrioides (strain NA1000 / CB15N) (Caulobacter crescentus).